An 81-amino-acid polypeptide reads, in one-letter code: Acyl carrier protein (81 aa).

The 79-residue stretch at 1–79 (MDREEILQKI…EAVDYVVEHQ (79 aa)) folds into the Carrier domain. At Ser-39 the chain carries O-(pantetheine 4'-phosphoryl)serine.

Belongs to the acyl carrier protein (ACP) family. In terms of processing, 4'-phosphopantetheine is transferred from CoA to a specific serine of apo-ACP by AcpS. This modification is essential for activity because fatty acids are bound in thioester linkage to the sulfhydryl of the prosthetic group.

The protein resides in the cytoplasm. It functions in the pathway lipid metabolism; fatty acid biosynthesis. Its function is as follows. Carrier of the growing fatty acid chain in fatty acid biosynthesis. This is Acyl carrier protein from Rubrobacter xylanophilus (strain DSM 9941 / JCM 11954 / NBRC 16129 / PRD-1).